A 724-amino-acid polypeptide reads, in one-letter code: ATPase family protein 2 homolog (724 aa).

ATP is bound by residues 281–287 and 503–508; these read PGSGKTL and GCSKTL.

Belongs to the AAA ATPase family. AFG2 subfamily. In terms of assembly, homohexamer; ATP binding induces oligomerization. Forms a ring-shaped particle of about 12 nm diameter, that displays 6-fold radial symmetry. Interacts (via N-terminus) with kinase air-2; the interaction is direct and inhibits air-2 kinase activity in an ATPase-dependent manner.

Its subcellular location is the cytoplasm. It carries out the reaction ATP + H2O = ADP + phosphate + H(+). Its function is as follows. ATP-dependent chaperone which uses the energy provided by ATP hydrolysis to generate mechanical force to disassemble protein complexes. Required for various steps of embryonic mitosis including centrosome duplication, spindle assembly, ER dynamics and cell cycle progression. Regulates the stability and activity of kinase air-2, a component of the chromosomal passenger complex (CPC). Inhibits air-2 kinase activity from metaphase to late telophase and negatively regulates air-2 stability during mitotic exit. Controls ER transition into sheet-like structures at the onset of mitosis, possibly by regulating homotypic membrane fusion. This is ATPase family protein 2 homolog from Caenorhabditis elegans.